Here is a 332-residue protein sequence, read N- to C-terminus: 2,3-diketo-L-gulonate reductase (332 aa).

Residue His44 is the Proton donor of the active site. Residues 168-174, 224-225, and 304-306 contribute to the NAD(+) site; these read ITMVDMS, WK, and GHE.

This sequence belongs to the LDH2/MDH2 oxidoreductase family. DlgD subfamily. In terms of assembly, homodimer.

It localises to the cytoplasm. The enzyme catalyses 3-dehydro-L-gulonate + NAD(+) = 2,3-dioxo-L-gulonate + NADH + H(+). It catalyses the reaction 3-dehydro-L-gulonate + NADP(+) = 2,3-dioxo-L-gulonate + NADPH + H(+). Its function is as follows. Catalyzes the reduction of 2,3-diketo-L-gulonate in the presence of NADH, to form 3-keto-L-gulonate. The protein is 2,3-diketo-L-gulonate reductase of Escherichia coli O8 (strain IAI1).